Reading from the N-terminus, the 219-residue chain is Small ribosomal subunit protein uS3 (219 aa).

The 69-residue stretch at 38-106 folds into the KH type-2 domain; the sequence is IRKYINTKLA…KVHINIVEIK (69 aa).

It belongs to the universal ribosomal protein uS3 family. As to quaternary structure, part of the 30S ribosomal subunit. Forms a tight complex with proteins S10 and S14.

In terms of biological role, binds the lower part of the 30S subunit head. Binds mRNA in the 70S ribosome, positioning it for translation. The polypeptide is Small ribosomal subunit protein uS3 (Latilactobacillus sakei subsp. sakei (strain 23K) (Lactobacillus sakei subsp. sakei)).